Consider the following 174-residue polypeptide: MAEFHDDDAQFEEKSKSQIKRELHALQDLGERLTTLQPQLLERLPLTDPLRKAVLDAPKHKAHIARKRHIQYIGKLMRDQDVDAIVALIEQVDTSTRQYNERFHALERWRDQLIAGGDAALDAFVGEFPDCDRQHLRSLVRHAQHEAAHNKPPAAARKVFKYIRELDETKRGLR.

Belongs to the DarP family.

The protein resides in the cytoplasm. In terms of biological role, member of a network of 50S ribosomal subunit biogenesis factors which assembles along the 30S-50S interface, preventing incorrect 23S rRNA structures from forming. Promotes peptidyl transferase center (PTC) maturation. The chain is Dual-action ribosomal maturation protein DarP from Pseudomonas paraeruginosa (strain DSM 24068 / PA7) (Pseudomonas aeruginosa (strain PA7)).